We begin with the raw amino-acid sequence, 330 residues long: uncharacterized protein (330 aa).

Residues 2–22 (IKPIYLIIIGTVICLVILYYF) form a helical membrane-spanning segment. Asn-72, Asn-94, Asn-234, and Asn-315 each carry an N-linked (GlcNAc...) asparagine; by host glycan.

Its subcellular location is the membrane. This is an uncharacterized protein from Acanthamoeba polyphaga mimivirus (APMV).